The primary structure comprises 200 residues: Recombination protein RecR (200 aa).

A C4-type zinc finger spans residues 59–74; the sequence is CEKCNTFTEAQICEVC. The 96-residue stretch at 82 to 177 folds into the Toprim domain; the sequence is ALLCVVETPA…AVTRLARGVP (96 aa).

Belongs to the RecR family.

Its function is as follows. May play a role in DNA repair. It seems to be involved in an RecBC-independent recombinational process of DNA repair. It may act with RecF and RecO. The protein is Recombination protein RecR of Burkholderia mallei (strain NCTC 10247).